The following is a 2293-amino-acid chain: Protein Ycf2 A (2293 aa).

1647–1654 (GSIGTGRS) serves as a coordination point for ATP.

It belongs to the Ycf2 family.

It localises to the plastid. The protein resides in the chloroplast stroma. Its function is as follows. Probable ATPase of unknown function. Its presence in a non-photosynthetic plant (Epifagus virginiana) and experiments in tobacco indicate that it has an essential function which is probably not related to photosynthesis. This is Protein Ycf2 A from Crucihimalaya wallichii (Rock-cress).